Reading from the N-terminus, the 125-residue chain is Monothiol glutaredoxin-S2 (125 aa).

The region spanning 28–124 (AERVGRLVRE…PRLREVGALC (97 aa)) is the Glutaredoxin domain. [2Fe-2S] cluster is bound at residue Cys-48.

Belongs to the glutaredoxin family. CC-type subfamily.

The protein resides in the cytoplasm. In terms of biological role, may only reduce GSH-thiol disulfides, but not protein disulfides. The polypeptide is Monothiol glutaredoxin-S2 (GRXS2) (Oryza sativa subsp. japonica (Rice)).